A 418-amino-acid chain; its full sequence is D-amino acid dehydrogenase (418 aa).

3-17 (VLVLGAGVAGVSSAW) serves as a coordination point for FAD.

The protein belongs to the DadA oxidoreductase family. FAD serves as cofactor.

The catalysed reaction is a D-alpha-amino acid + A + H2O = a 2-oxocarboxylate + AH2 + NH4(+). Its pathway is amino-acid degradation; D-alanine degradation; NH(3) and pyruvate from D-alanine: step 1/1. In terms of biological role, oxidative deamination of D-amino acids. The sequence is that of D-amino acid dehydrogenase from Neisseria meningitidis serogroup C / serotype 2a (strain ATCC 700532 / DSM 15464 / FAM18).